The chain runs to 503 residues: UDP-N-acetylmuramoylalanine--D-glutamate ligase (503 aa).

Gly129–Thr135 is a binding site for ATP.

Belongs to the MurCDEF family.

The protein localises to the cytoplasm. The enzyme catalyses UDP-N-acetyl-alpha-D-muramoyl-L-alanine + D-glutamate + ATP = UDP-N-acetyl-alpha-D-muramoyl-L-alanyl-D-glutamate + ADP + phosphate + H(+). It participates in cell wall biogenesis; peptidoglycan biosynthesis. In terms of biological role, cell wall formation. Catalyzes the addition of glutamate to the nucleotide precursor UDP-N-acetylmuramoyl-L-alanine (UMA). The sequence is that of UDP-N-acetylmuramoylalanine--D-glutamate ligase from Burkholderia vietnamiensis (strain G4 / LMG 22486) (Burkholderia cepacia (strain R1808)).